The chain runs to 396 residues: Elongation factor Tu (396 aa).

The region spanning 10 to 206 (KPHCNIGTIG…AVDAYIPQPE (197 aa)) is the tr-type G domain. The segment at 19 to 26 (GHVDHGKT) is G1. GTP is bound at residue 19–26 (GHVDHGKT). A Mg(2+)-binding site is contributed by Thr-26. The interval 60 to 64 (GITIS) is G2. The tract at residues 81 to 84 (DCPG) is G3. Residues 81-85 (DCPGH) and 136-139 (NKCD) each bind GTP. Residues 136-139 (NKCD) form a G4 region. The G5 stretch occupies residues 174-176 (SAL).

The protein belongs to the TRAFAC class translation factor GTPase superfamily. Classic translation factor GTPase family. EF-Tu/EF-1A subfamily. Monomer.

It localises to the cytoplasm. The catalysed reaction is GTP + H2O = GDP + phosphate + H(+). GTP hydrolase that promotes the GTP-dependent binding of aminoacyl-tRNA to the A-site of ribosomes during protein biosynthesis. The chain is Elongation factor Tu from Rhodopseudomonas palustris (strain HaA2).